We begin with the raw amino-acid sequence, 596 residues long: Aspartic proteinase MKC7 (596 aa).

The first 22 residues, 1 to 22 (MKLSVLTFVVDALLVCSSIVDA), serve as a signal peptide directing secretion. Positions 23 to 65 (GVTDFPSLPSNEVYVKMNFQKKYGSSFENALDDTKGRTRLMTR) are excised as a propeptide. In terms of domain architecture, Peptidase A1 spans 81–468 (YSVELDIGTP…DLDNMEISMA (388 aa)). The active site involves aspartate 99. N-linked (GlcNAc...) asparagine glycosylation is found at asparagine 180, asparagine 190, asparagine 219, asparagine 229, asparagine 232, asparagine 286, and asparagine 346. Residue aspartate 360 is part of the active site. Residues asparagine 471 and asparagine 517 are each glycosylated (N-linked (GlcNAc...) asparagine). Low complexity predominate over residues 530–570 (ATSSSSSKGQKTQTSTTALSISKSTSSTSSTGMLSPTSSSS). A disordered region spans residues 530 to 578 (ATSSSSSKGQKTQTSTTALSISKSTSSTSSTGMLSPTSSSSTRKENGGH). Residue asparagine 575 is the site of GPI-anchor amidated asparagine attachment. The propeptide at 576–596 (GGHNLNPPFFARFITAIFHHI) is removed in mature form.

It belongs to the peptidase A1 family.

The protein resides in the cell membrane. The enzyme catalyses Hydrolyzes various precursor proteins with Arg or Lys in P1, and commonly Arg or Lys also in P2. The P3 amino acid is usually non-polar, but otherwise additional basic amino acids are favorable in both non-prime and prime positions.. Functionally, cleaves proteins C-terminally to the most C-terminal basic residue. Can process the alpha-mating factor precursor. Required for cell wall integrity. In Saccharomyces cerevisiae (strain ATCC 204508 / S288c) (Baker's yeast), this protein is Aspartic proteinase MKC7 (MKC7).